The primary structure comprises 525 residues: GMP synthase [glutamine-hydrolyzing] (525 aa).

The region spanning 8–206 is the Glutamine amidotransferase type-1 domain; it reads PLLILDFGSQ…VVDICKAPTE (199 aa). Residue C85 is the Nucleophile of the active site. Active-site residues include H180 and E182. A GMPS ATP-PPase domain is found at 207–400; that stretch reads WTPEHIIDEA…LGLPHDMVYR (194 aa). Residue 234 to 240 coordinates ATP; it reads SGGVDSS.

As to quaternary structure, homodimer.

The enzyme catalyses XMP + L-glutamine + ATP + H2O = GMP + L-glutamate + AMP + diphosphate + 2 H(+). It functions in the pathway purine metabolism; GMP biosynthesis; GMP from XMP (L-Gln route): step 1/1. Catalyzes the synthesis of GMP from XMP. The polypeptide is GMP synthase [glutamine-hydrolyzing] (Legionella pneumophila (strain Corby)).